Here is a 386-residue protein sequence, read N- to C-terminus: DNA-directed RNA polymerase subunit Rpo1C (386 aa).

Belongs to the RNA polymerase beta' chain family. In terms of assembly, part of the RNA polymerase complex.

The protein resides in the cytoplasm. The enzyme catalyses RNA(n) + a ribonucleoside 5'-triphosphate = RNA(n+1) + diphosphate. Functionally, DNA-dependent RNA polymerase (RNAP) catalyzes the transcription of DNA into RNA using the four ribonucleoside triphosphates as substrates. Forms part of the jaw domain. This chain is DNA-directed RNA polymerase subunit Rpo1C, found in Methanococcus maripaludis (strain C7 / ATCC BAA-1331).